Reading from the N-terminus, the 309-residue chain is Ubiquitin-conjugating enzyme E2 32 (309 aa).

A UBC core domain is found at 11–166; sequence PAVKRILQEV…ERQKIIDEIH (156 aa). The active-site Glycyl thioester intermediate is the Cys-93. Residues 275-295 form a helical membrane-spanning segment; the sequence is FTWAAVGLTIAIMVLLLKKFI.

It belongs to the ubiquitin-conjugating enzyme family.

It localises to the membrane. The enzyme catalyses S-ubiquitinyl-[E1 ubiquitin-activating enzyme]-L-cysteine + [E2 ubiquitin-conjugating enzyme]-L-cysteine = [E1 ubiquitin-activating enzyme]-L-cysteine + S-ubiquitinyl-[E2 ubiquitin-conjugating enzyme]-L-cysteine.. It participates in protein modification; protein ubiquitination. Accepts the ubiquitin from the E1 complex and catalyzes its covalent attachment to other proteins. This Arabidopsis thaliana (Mouse-ear cress) protein is Ubiquitin-conjugating enzyme E2 32 (UBC32).